The following is a 115-amino-acid chain: Holo-[acyl-carrier-protein] synthase (115 aa).

Mg(2+)-binding residues include D6 and E51.

This sequence belongs to the P-Pant transferase superfamily. AcpS family. It depends on Mg(2+) as a cofactor.

The protein resides in the cytoplasm. The catalysed reaction is apo-[ACP] + CoA = holo-[ACP] + adenosine 3',5'-bisphosphate + H(+). Functionally, transfers the 4'-phosphopantetheine moiety from coenzyme A to a Ser of acyl-carrier-protein. The chain is Holo-[acyl-carrier-protein] synthase from Campylobacter jejuni subsp. doylei (strain ATCC BAA-1458 / RM4099 / 269.97).